The chain runs to 385 residues: Leucine aminopeptidase 1 (385 aa).

An N-terminal signal peptide occupies residues 1-19 (MKFPNLLSLGVAASTTVLA). Residues 20–87 (AVPNQKPIGD…FPRTFAQTTV (68 aa)) constitute a propeptide that is removed on maturation. N-linked (GlcNAc...) asparagine glycosylation occurs at Asn-177. Zn(2+)-binding residues include His-185, Asp-204, Glu-243, and Asp-270. A disulfide bridge connects residues Cys-319 and Cys-323. His-352 serves as a coordination point for Zn(2+).

Belongs to the peptidase M28 family. M28E subfamily. In terms of assembly, monomer. Zn(2+) serves as cofactor.

The protein localises to the secreted. Its function is as follows. Extracellular aminopeptidase that allows assimilation of proteinaceous substrates. The protein is Leucine aminopeptidase 1 (LAP1) of Ajellomyces capsulatus (strain H88) (Darling's disease fungus).